The following is a 935-amino-acid chain: Isoleucine--tRNA ligase (935 aa).

Positions 58-68 (PYANGSIHVGH) match the 'HIGH' region motif. Position 558 (glutamate 558) interacts with L-isoleucyl-5'-AMP. The 'KMSKS' region motif lies at 599-603 (KMSKS). ATP is bound at residue lysine 602. Zn(2+) contacts are provided by cysteine 897, cysteine 900, cysteine 917, and cysteine 920.

Belongs to the class-I aminoacyl-tRNA synthetase family. IleS type 1 subfamily. As to quaternary structure, monomer. Zn(2+) serves as cofactor.

It localises to the cytoplasm. The enzyme catalyses tRNA(Ile) + L-isoleucine + ATP = L-isoleucyl-tRNA(Ile) + AMP + diphosphate. Functionally, catalyzes the attachment of isoleucine to tRNA(Ile). As IleRS can inadvertently accommodate and process structurally similar amino acids such as valine, to avoid such errors it has two additional distinct tRNA(Ile)-dependent editing activities. One activity is designated as 'pretransfer' editing and involves the hydrolysis of activated Val-AMP. The other activity is designated 'posttransfer' editing and involves deacylation of mischarged Val-tRNA(Ile). In Francisella tularensis subsp. tularensis (strain WY96-3418), this protein is Isoleucine--tRNA ligase.